The primary structure comprises 565 residues: NAD-dependent malic enzyme (565 aa).

Tyr104 (proton donor) is an active-site residue. Arg157 contacts NAD(+). The active-site Proton acceptor is Lys175. Residues Glu246, Asp247, and Asp270 each contribute to the a divalent metal cation site. Residues Asp270 and Asn418 each coordinate NAD(+).

This sequence belongs to the malic enzymes family. Homotetramer. The cofactor is Mg(2+). Requires Mn(2+) as cofactor.

The catalysed reaction is (S)-malate + NAD(+) = pyruvate + CO2 + NADH. It catalyses the reaction oxaloacetate + H(+) = pyruvate + CO2. The chain is NAD-dependent malic enzyme from Escherichia coli O6:H1 (strain CFT073 / ATCC 700928 / UPEC).